A 325-amino-acid chain; its full sequence is Elongation factor P--(R)-beta-lysine ligase (325 aa).

76–78 serves as a coordination point for substrate; it reads SPE. ATP is bound by residues 100 to 102 and Asn-109; that span reads RNE. Residue Tyr-118 participates in substrate binding. Residue 244–245 coordinates ATP; it reads EL. Residue Glu-251 coordinates substrate. Gly-300 lines the ATP pocket.

Belongs to the class-II aminoacyl-tRNA synthetase family. EpmA subfamily. In terms of assembly, homodimer.

It catalyses the reaction D-beta-lysine + L-lysyl-[protein] + ATP = N(6)-((3R)-3,6-diaminohexanoyl)-L-lysyl-[protein] + AMP + diphosphate + H(+). Functionally, with EpmB is involved in the beta-lysylation step of the post-translational modification of translation elongation factor P (EF-P). Catalyzes the ATP-dependent activation of (R)-beta-lysine produced by EpmB, forming a lysyl-adenylate, from which the beta-lysyl moiety is then transferred to the epsilon-amino group of a conserved specific lysine residue in EF-P. This Klebsiella pneumoniae subsp. pneumoniae (strain ATCC 700721 / MGH 78578) protein is Elongation factor P--(R)-beta-lysine ligase.